We begin with the raw amino-acid sequence, 298 residues long: Probable tRNA(His) guanylyltransferase (298 aa).

D58, G59, and D105 together coordinate Mg(2+). GTP-binding positions include 58–63 and 104–105; these read DGRNFH and SD.

The protein belongs to the tRNA(His) guanylyltransferase family. Homotetramer. Interacts with MFN1 and MFN2; functions as a guanyl-nucleotide exchange factor/GEF for MFN2 and also probably MFN1. Mg(2+) is required as a cofactor.

It localises to the cytoplasm. The protein localises to the mitochondrion. The catalysed reaction is a 5'-end ribonucleotide-tRNA(His) + GTP + ATP + H2O = a 5'-end phospho-guanosine-ribonucleotide-tRNA(His) + AMP + 2 diphosphate + H(+). Its function is as follows. Adds a GMP to the 5'-end of tRNA(His) after transcription and RNase P cleavage. This step is essential for proper recognition of the tRNA and for the fidelity of protein synthesis. Also functions as a guanyl-nucleotide exchange factor/GEF for the MFN1 and MFN2 mitofusins thereby regulating mitochondrial fusion. By regulating both mitochondrial dynamics and bioenergetic function, it contributes to cell survival following oxidative stress. The polypeptide is Probable tRNA(His) guanylyltransferase (THG1L) (Bos taurus (Bovine)).